We begin with the raw amino-acid sequence, 576 residues long: Probable DNA ligase (576 aa).

E235 lines the ATP pocket. Catalysis depends on K237, which acts as the N6-AMP-lysine intermediate. Residues R242, R257, E285, F324, R422, and K428 each contribute to the ATP site.

Belongs to the ATP-dependent DNA ligase family. It depends on Mg(2+) as a cofactor.

It catalyses the reaction ATP + (deoxyribonucleotide)n-3'-hydroxyl + 5'-phospho-(deoxyribonucleotide)m = (deoxyribonucleotide)n+m + AMP + diphosphate.. Functionally, DNA ligase that seals nicks in double-stranded DNA during DNA replication, DNA recombination and DNA repair. This is Probable DNA ligase from Koribacter versatilis (strain Ellin345).